Here is a 208-residue protein sequence, read N- to C-terminus: Hypoxanthine-guanine phosphoribosyltransferase (208 aa).

Residues Lys63, 122 to 130 (EDIVDSAIT), Lys154, and Asp182 contribute to the GMP site. The active-site Proton acceptor is the Asp126. Residue Asp182 participates in Mg(2+) binding.

This sequence belongs to the purine/pyrimidine phosphoribosyltransferase family. It depends on Mg(2+) as a cofactor.

The protein resides in the cytoplasm. The catalysed reaction is IMP + diphosphate = hypoxanthine + 5-phospho-alpha-D-ribose 1-diphosphate. It carries out the reaction GMP + diphosphate = guanine + 5-phospho-alpha-D-ribose 1-diphosphate. The protein operates within purine metabolism; IMP biosynthesis via salvage pathway; IMP from hypoxanthine: step 1/1. In terms of biological role, converts guanine to guanosine monophosphate, and hypoxanthine to inosine monophosphate. Transfers the 5-phosphoribosyl group from 5-phosphoribosylpyrophosphate onto the purine. Plays a central role in the generation of purine nucleotides through the purine salvage pathway. The chain is Hypoxanthine-guanine phosphoribosyltransferase (HGPRT) from Crithidia fasciculata.